A 60-amino-acid chain; its full sequence is uncharacterized protein (60 aa).

Residues 38-58 (SILAGGIIPVLFFFPLFLFLY) form a helical membrane-spanning segment.

The protein resides in the membrane. This is an uncharacterized protein from Saccharomyces cerevisiae (strain ATCC 204508 / S288c) (Baker's yeast).